The sequence spans 248 residues: UPF0736 protein BCAH187_A1335 (248 aa).

It belongs to the UPF0736 family.

The sequence is that of UPF0736 protein BCAH187_A1335 from Bacillus cereus (strain AH187).